The sequence spans 264 residues: NAD-capped RNA hydrolase NudC (264 aa).

A substrate-binding site is contributed by R70. Residues C99 and C102 each coordinate Zn(2+). Substrate is bound at residue E112. Zn(2+) contacts are provided by C117 and C122. Y127 is a substrate binding site. In terms of domain architecture, Nudix hydrolase spans P128–T252. A divalent metal cation is bound by residues A161, E177, and E181. The Nudix box signature appears at G162–G183. Q195 to S202 contributes to the substrate binding site. E222 is a binding site for a divalent metal cation. A245 serves as a coordination point for substrate.

Belongs to the Nudix hydrolase family. NudC subfamily. In terms of assembly, homodimer. It depends on Mg(2+) as a cofactor. Mn(2+) is required as a cofactor. Requires Zn(2+) as cofactor.

It carries out the reaction a 5'-end NAD(+)-phospho-ribonucleoside in mRNA + H2O = a 5'-end phospho-adenosine-phospho-ribonucleoside in mRNA + beta-nicotinamide D-ribonucleotide + 2 H(+). The catalysed reaction is NAD(+) + H2O = beta-nicotinamide D-ribonucleotide + AMP + 2 H(+). The enzyme catalyses NADH + H2O = reduced beta-nicotinamide D-ribonucleotide + AMP + 2 H(+). Its function is as follows. mRNA decapping enzyme that specifically removes the nicotinamide adenine dinucleotide (NAD) cap from a subset of mRNAs by hydrolyzing the diphosphate linkage to produce nicotinamide mononucleotide (NMN) and 5' monophosphate mRNA. The NAD-cap is present at the 5'-end of some mRNAs and stabilizes RNA against 5'-processing. Has preference for mRNAs with a 5'-end purine. Catalyzes the hydrolysis of a broad range of dinucleotide pyrophosphates. This Pasteurella multocida (strain Pm70) protein is NAD-capped RNA hydrolase NudC.